The sequence spans 330 residues: DNA-directed RNA polymerase subunit alpha (330 aa).

Positions 1–236 (MQGSVTEFLK…EQLDAFVDLR (236 aa)) are alpha N-terminal domain (alpha-NTD). The interval 250–330 (FDPILLRPVD…NWPPASIAED (81 aa)) is alpha C-terminal domain (alpha-CTD).

This sequence belongs to the RNA polymerase alpha chain family. In terms of assembly, homodimer. The RNAP catalytic core consists of 2 alpha, 1 beta, 1 beta' and 1 omega subunit. When a sigma factor is associated with the core the holoenzyme is formed, which can initiate transcription.

The catalysed reaction is RNA(n) + a ribonucleoside 5'-triphosphate = RNA(n+1) + diphosphate. Its function is as follows. DNA-dependent RNA polymerase catalyzes the transcription of DNA into RNA using the four ribonucleoside triphosphates as substrates. The polypeptide is DNA-directed RNA polymerase subunit alpha (Vibrio campbellii (strain ATCC BAA-1116)).